The primary structure comprises 172 residues: uncharacterized protein (172 aa).

One can recognise an HTH cro/C1-type domain in the interval 21–75 (FKRILLELGLTLKEFSEISGIPYSTLYKVIQGKDFRVSTLIKILKTIRSFEKDEN). The segment at residues 32 to 51 (LKEFSEISGIPYSTLYKVIQ) is a DNA-binding region (H-T-H motif).

This is an uncharacterized protein from Methanocaldococcus jannaschii (strain ATCC 43067 / DSM 2661 / JAL-1 / JCM 10045 / NBRC 100440) (Methanococcus jannaschii).